The following is a 411-amino-acid chain: Exodeoxyribonuclease 7 large subunit (411 aa).

It belongs to the XseA family. Heterooligomer composed of large and small subunits.

The protein resides in the cytoplasm. The catalysed reaction is Exonucleolytic cleavage in either 5'- to 3'- or 3'- to 5'-direction to yield nucleoside 5'-phosphates.. Its function is as follows. Bidirectionally degrades single-stranded DNA into large acid-insoluble oligonucleotides, which are then degraded further into small acid-soluble oligonucleotides. This is Exodeoxyribonuclease 7 large subunit from Mycobacterium sp. (strain JLS).